The sequence spans 341 residues: Hypophosphite import ATP-binding protein HtxD (341 aa).

In terms of domain architecture, ABC transporter spans 6–249 (LQLKNVGKSY…RVHALYQVPA (244 aa)). 38-45 (GTSGAGKS) lines the ATP pocket. The disordered stretch occupies residues 278–341 (IHTPHTRAAP…TGRGQDRGPG (64 aa)). Basic and acidic residues-rich tracts occupy residues 307–320 (ADRR…DRTT) and 327–341 (GGHD…RGPG).

The protein belongs to the ABC transporter superfamily. Phosphonates importer (TC 3.A.1.9.1) family. As to quaternary structure, the complex is composed of two ATP-binding proteins (HtxD), two transmembrane proteins (HtxC and HtxE) and a solute-binding protein (HtxB).

Its subcellular location is the cell inner membrane. The catalysed reaction is phosphinate(out) + ATP + H2O = phosphinate(in) + ADP + phosphate + H(+). Part of the ABC transporter complex HtxBCDE involved in hypophosphite import. Responsible for energy coupling to the transport system. This Stutzerimonas stutzeri (Pseudomonas stutzeri) protein is Hypophosphite import ATP-binding protein HtxD (htxD).